The primary structure comprises 25 residues: Unknown protein 4 (25 aa).

Basic and acidic residues predominate over residues isoleucine 1 to lysine 10. Positions isoleucine 1–lysine 25 are disordered. Residues alanine 16–lysine 25 are compositionally biased toward polar residues.

The protein is Unknown protein 4 of Lonomia obliqua (Moth).